A 215-amino-acid polypeptide reads, in one-letter code: Probable transaldolase 1 (215 aa).

Lysine 83 functions as the Schiff-base intermediate with substrate in the catalytic mechanism.

Belongs to the transaldolase family. Type 3B subfamily.

It localises to the cytoplasm. It catalyses the reaction D-sedoheptulose 7-phosphate + D-glyceraldehyde 3-phosphate = D-erythrose 4-phosphate + beta-D-fructose 6-phosphate. It functions in the pathway carbohydrate degradation; pentose phosphate pathway; D-glyceraldehyde 3-phosphate and beta-D-fructose 6-phosphate from D-ribose 5-phosphate and D-xylulose 5-phosphate (non-oxidative stage): step 2/3. Transaldolase is important for the balance of metabolites in the pentose-phosphate pathway. This Bacillus anthracis protein is Probable transaldolase 1.